The following is a 404-amino-acid chain: MKITNIGAIVTPVGNSYHSGDKQSELDFIENATIYIENGKIAKITREHSSDAGDLDAEGSIVIPGLVDSHTHIIFGGNRSQEFYQRASGYTYSEILRSGNGIYKTVRDTANSSADEIFTQSMKRIADAVSHGTTTIELKTGYGLYEKEERKLLDVARKISNSGLVSTVLTYLMHVLPEGESEEAYEKYSEKILSSFRNYISFADVFCDEGAFSPNAAKAFLKFADNLGLGLKIHANEINNIGCVKACSGLNVKSFDHMIHANAEDVETIRSIGSAITLLPLTVFALDESYPDARVFIDSGVPVIIASDISPLNYNANLIFAMHLAVKYSSMKPEEALTATTINAASSLGLGEKKGTVEEGKDADIVIIDVDDYTEIPYEYGINTVKKVFHNGSLVFDRTKQFKL.

Residues His-70 and His-72 each contribute to the Fe(3+) site. The Zn(2+) site is built by His-70 and His-72. Positions 79, 142, and 174 each coordinate 4-imidazolone-5-propanoate. Tyr-142 is a binding site for N-formimidoyl-L-glutamate. Residue His-234 coordinates Fe(3+). His-234 is a Zn(2+) binding site. Glu-237 is a binding site for 4-imidazolone-5-propanoate. Asp-308 is a binding site for Fe(3+). Residue Asp-308 participates in Zn(2+) binding.

It belongs to the metallo-dependent hydrolases superfamily. HutI family. It depends on Zn(2+) as a cofactor. Requires Fe(3+) as cofactor.

It is found in the cytoplasm. It catalyses the reaction 4-imidazolone-5-propanoate + H2O = N-formimidoyl-L-glutamate. The protein operates within amino-acid degradation; L-histidine degradation into L-glutamate; N-formimidoyl-L-glutamate from L-histidine: step 3/3. Functionally, catalyzes the hydrolytic cleavage of the carbon-nitrogen bond in imidazolone-5-propanoate to yield N-formimidoyl-L-glutamate. It is the third step in the universal histidine degradation pathway. The polypeptide is Imidazolonepropionase (Thermoplasma volcanium (strain ATCC 51530 / DSM 4299 / JCM 9571 / NBRC 15438 / GSS1)).